Here is a 426-residue protein sequence, read N- to C-terminus: Cytochrome c biogenesis protein CcsB (426 aa).

3 consecutive transmembrane segments (helical) span residues 14–34, 72–92, and 162–182; these read LKIAILLLLLIAISCAAGTLI, SFWFLFLLIWLGLALSVCSFR, and LGPILIHLGMILLMIGATYGS.

The protein belongs to the Ccs1/CcsB family. As to quaternary structure, may interact with CcsA.

It localises to the cellular thylakoid membrane. Required during biogenesis of c-type cytochromes (cytochrome c6 and cytochrome f) at the step of heme attachment. In Prochlorococcus marinus (strain NATL1A), this protein is Cytochrome c biogenesis protein CcsB.